A 259-amino-acid polypeptide reads, in one-letter code: Probable dihydroorotate dehydrogenase B (NAD(+)), electron transfer subunit (259 aa).

Residues 1–89 enclose the FAD-binding FR-type domain; the sequence is MLPLNATIVQ…RGPFGKGFSL (89 aa). Cys-211, Cys-216, Cys-219, and Cys-229 together coordinate [2Fe-2S] cluster.

This sequence belongs to the PyrK family. Heterotetramer of 2 PyrK and 2 PyrD type B subunits. The cofactor is [2Fe-2S] cluster. FAD is required as a cofactor.

It participates in pyrimidine metabolism; UMP biosynthesis via de novo pathway; orotate from (S)-dihydroorotate (NAD(+) route): step 1/1. In terms of biological role, responsible for channeling the electrons from the oxidation of dihydroorotate from the FMN redox center in the PyrD type B subunit to the ultimate electron acceptor NAD(+). This chain is Probable dihydroorotate dehydrogenase B (NAD(+)), electron transfer subunit, found in Methanosarcina barkeri (strain Fusaro / DSM 804).